The sequence spans 92 residues: UPF0298 protein BH2594 (92 aa).

Belongs to the UPF0298 family.

The protein localises to the cytoplasm. The protein is UPF0298 protein BH2594 of Halalkalibacterium halodurans (strain ATCC BAA-125 / DSM 18197 / FERM 7344 / JCM 9153 / C-125) (Bacillus halodurans).